A 157-amino-acid polypeptide reads, in one-letter code: Crossover junction endodeoxyribonuclease RuvC (157 aa).

Residues Asp-7, Glu-67, and Asp-140 contribute to the active site. Positions 7, 67, and 140 each coordinate Mg(2+).

This sequence belongs to the RuvC family. In terms of assembly, homodimer which binds Holliday junction (HJ) DNA. The HJ becomes 2-fold symmetrical on binding to RuvC with unstacked arms; it has a different conformation from HJ DNA in complex with RuvA. In the full resolvosome a probable DNA-RuvA(4)-RuvB(12)-RuvC(2) complex forms which resolves the HJ. Mg(2+) is required as a cofactor.

The protein resides in the cytoplasm. The catalysed reaction is Endonucleolytic cleavage at a junction such as a reciprocal single-stranded crossover between two homologous DNA duplexes (Holliday junction).. The RuvA-RuvB-RuvC complex processes Holliday junction (HJ) DNA during genetic recombination and DNA repair. Endonuclease that resolves HJ intermediates. Cleaves cruciform DNA by making single-stranded nicks across the HJ at symmetrical positions within the homologous arms, yielding a 5'-phosphate and a 3'-hydroxyl group; requires a central core of homology in the junction. The consensus cleavage sequence is 5'-(A/T)TT(C/G)-3'. Cleavage occurs on the 3'-side of the TT dinucleotide at the point of strand exchange. HJ branch migration catalyzed by RuvA-RuvB allows RuvC to scan DNA until it finds its consensus sequence, where it cleaves and resolves the cruciform DNA. This chain is Crossover junction endodeoxyribonuclease RuvC, found in Rickettsia africae (strain ESF-5).